We begin with the raw amino-acid sequence, 176 residues long: ATP-dependent protease subunit HslV (176 aa).

Threonine 5 is a catalytic residue. Residues glycine 161, cysteine 164, and threonine 167 each coordinate Na(+).

The protein belongs to the peptidase T1B family. HslV subfamily. In terms of assembly, a double ring-shaped homohexamer of HslV is capped on each side by a ring-shaped HslU homohexamer. The assembly of the HslU/HslV complex is dependent on binding of ATP.

The protein localises to the cytoplasm. The enzyme catalyses ATP-dependent cleavage of peptide bonds with broad specificity.. Allosterically activated by HslU binding. Protease subunit of a proteasome-like degradation complex believed to be a general protein degrading machinery. This Wolinella succinogenes (strain ATCC 29543 / DSM 1740 / CCUG 13145 / JCM 31913 / LMG 7466 / NCTC 11488 / FDC 602W) (Vibrio succinogenes) protein is ATP-dependent protease subunit HslV.